The following is a 164-amino-acid chain: UPF0304 protein ECA3037 (164 aa).

This sequence belongs to the UPF0304 family.

The protein is UPF0304 protein ECA3037 of Pectobacterium atrosepticum (strain SCRI 1043 / ATCC BAA-672) (Erwinia carotovora subsp. atroseptica).